The chain runs to 425 residues: tRNA(Ile)-lysidine synthase (425 aa).

27-32 (SGGLDS) contributes to the ATP binding site.

Belongs to the tRNA(Ile)-lysidine synthase family.

Its subcellular location is the cytoplasm. It catalyses the reaction cytidine(34) in tRNA(Ile2) + L-lysine + ATP = lysidine(34) in tRNA(Ile2) + AMP + diphosphate + H(+). In terms of biological role, ligates lysine onto the cytidine present at position 34 of the AUA codon-specific tRNA(Ile) that contains the anticodon CAU, in an ATP-dependent manner. Cytidine is converted to lysidine, thus changing the amino acid specificity of the tRNA from methionine to isoleucine. In Streptococcus pneumoniae (strain P1031), this protein is tRNA(Ile)-lysidine synthase.